The sequence spans 116 residues: Cysteine proteinase inhibitor 1 (116 aa).

Residues M1–G22 form the signal peptide. In terms of domain architecture, Cystatin spans G30–G89. A Secondary area of contact motif is present at residues Q73–G77. N-linked (GlcNAc...) asparagine glycosylation is present at N109.

Belongs to the cystatin family. Phytocystatin subfamily.

The protein resides in the secreted. Its function is as follows. Specific inhibitor of papain family cysteine proteinases. This is Cysteine proteinase inhibitor 1 from Actinidia chinensis var. chinensis (Chinese soft-hair kiwi).